The primary structure comprises 433 residues: D-amino acid dehydrogenase (433 aa).

Residue 3–17 (IVVLGAGVLGVTSAW) participates in FAD binding.

This sequence belongs to the DadA oxidoreductase family. Requires FAD as cofactor.

It catalyses the reaction a D-alpha-amino acid + A + H2O = a 2-oxocarboxylate + AH2 + NH4(+). It participates in amino-acid degradation; D-alanine degradation; NH(3) and pyruvate from D-alanine: step 1/1. Oxidative deamination of D-amino acids. In Paracoccus denitrificans (strain Pd 1222), this protein is D-amino acid dehydrogenase.